Here is a 188-residue protein sequence, read N- to C-terminus: uncharacterized protein (188 aa).

Residues 57 to 80 (NDDVAPVAEGPKQERRSPSRNIGR) are disordered.

The protein belongs to the transposase 25 family.

This is an uncharacterized protein from Sinorhizobium fredii (strain NBRC 101917 / NGR234).